Consider the following 1069-residue polypeptide: MLRMRTAGWARGWCLGCCLLLPLSLSLAAAKQLLRYRLAEEGPADVRIGNVASDLGIVTGSGEVTFSLESGSEYLKIDNLTGELSTSERRIDREKLPQCQMIFDENECFLDFEVSVIGPSQSWVDLFEGQVIVLDINDNTPTFPSPVLTLTVEENRPVGTLYLLPTATDRDFGRNGIERYELLQEPGGGGSGGESRRAGAADSAPYPGGGGNGASGGGSGGSKRRLDASEGGGGTNPGGRSSVFELQVADTPDGEKQPQLIVKGALDREQRDSYELTLRVRDGGDPPRSSQAILRVLITDVNDNSPRFEKSVYEADLAENSAPGTPILQLRAADLDVGVNGQIEYVFGAATESVRRLLRLDETSGWLSVLHRIDREEVNQLRFTVMARDRGQPPKTDKATVVLNIKDENDNVPSIEIRKIGRIPLKDGVANVAEDVLVDTPIALVQVSDRDQGENGVVTCTVVGDVPFQLKPASDTEGDQNKKKYFLHTSTPLDYEATREFNVVIVAVDSGSPSLSSNNSLIVKVGDTNDNPPMFGQSVVEVYFPENNIPGERVATVLATDADSGKNAEIAYSLDSSVMGIFAIDPDSGDILVNTVLDREQTDRYEFKVNAKDKGIPVLQGSTTVIVQVADKNDNDPKFMQDVFTFYVKENLQPNSPVGMVTVMDADKGRNAEMSLYIEENNNIFSIENDTGTIYSTMSFDREHQTTYTFRVKAVDGGDPPRSATATVSLFVMDENDNAPTVTLPKNISYTLLPPSSNVRTVVATVLATDSDDGINADLNYSIVGGNPFKLFEIDPTSGVVSLVGKLTQKHYGLHRLVVQVNDSGQPSQSTTTLVHVFVNESVSNATAIDSQIARSLHIPLTQDIAGDPSYEISKQRLSIVIGVVAGIMTVILIILIVVMARYCRSKNKNGYEAGKKDHEDFFTPQQHDKSKKPKKDKKNKKSKQPLYSSIVTVEASKPNGQRYDSVNEKLSDSPSMGRYRSVNGGPGSPDLARHYKSSSPLPTVQLHPQSPTAGKKHQAVQDLPPANTFVGAGDNISIGSDHCSEYSCQTNNKYSKQMRLHPYITVFG.

A signal peptide spans 1-28; that stretch reads MLRMRTAGWARGWCLGCCLLLPLSLSLA. Cadherin domains are found at residues 29–143, 144–308, 309–415, 424–535, 536–639, 640–742, and 745–862; these read AAKQ…TPTF, PSPV…SPRF, EKSV…VPSI, PLKD…PPMF, GQSV…DPKF, MQDV…APTV, and PKNI…IPLT. The Extracellular portion of the chain corresponds to 29 to 879; the sequence is AAKQLLRYRL…SYEISKQRLS (851 aa). The N-linked (GlcNAc...) asparagine glycan is linked to N79. The segment at 182 to 242 is disordered; sequence LLQEPGGGGS…GGTNPGGRSS (61 aa). Positions 207–221 are enriched in gly residues; that stretch reads PGGGGNGASGGGSGG. N689, N747, N780, N822, N840, and N845 each carry an N-linked (GlcNAc...) asparagine glycan. Residues 880–900 form a helical membrane-spanning segment; that stretch reads IVIGVVAGIMTVILIILIVVM. Residues 901–1069 are Cytoplasmic-facing; the sequence is ARYCRSKNKN…RLHPYITVFG (169 aa). The interval 910–988 is disordered; sequence NGYEAGKKDH…RYRSVNGGPG (79 aa). Basic residues predominate over residues 930 to 944; it reads KSKKPKKDKKNKKSK. Residues S989 and S1011 each carry the phosphoserine modification.

As to expression, expressed predominantly in brain and heart and at lower levels in various other tissues.

The protein resides in the cell membrane. The chain is Protocadherin-7 (PCDH7) from Homo sapiens (Human).